A 133-amino-acid chain; its full sequence is Putative esterase STK_17900 (133 aa).

It belongs to the thioesterase PaaI family.

In Sulfurisphaera tokodaii (strain DSM 16993 / JCM 10545 / NBRC 100140 / 7) (Sulfolobus tokodaii), this protein is Putative esterase STK_17900.